A 125-amino-acid chain; its full sequence is Protein MGF 360-9L (125 aa).

Belongs to the asfivirus MGF 360 family. Interacts with host STAT1; this interaction mediates STAT1 degradation through apoptosis. Interacts with host STAT2; this interaction mediates STAT2 degradation through the proteasome.

The protein localises to the host cytoplasm. Plays a role in virus cell tropism, and may be required for efficient virus replication in macrophages. In addition, inhibits IFN-beta-induced IFN-stimulated genes (ISGs) transcription. Mechanistically, degrades host STAT1 and STAT2 through apoptosis and ubiquitin-proteasome pathways respectively. The polypeptide is Protein MGF 360-9L (African swine fever virus (strain Badajoz 1971 Vero-adapted) (Ba71V)).